The following is a 353-amino-acid chain: Phospho-N-acetylmuramoyl-pentapeptide-transferase (353 aa).

10 helical membrane-spanning segments follow: residues 24–44 (LGFF…ILWA), 66–86 (TPTM…VLCA), 88–108 (LGNL…FVGF), 129–149 (FGML…KGLD), 160–180 (PLFE…FLST), 192–212 (GLAS…VYVA), 229–249 (VGEL…FLWY), 256–276 (VFMG…NAIV), 281–301 (ILLV…ILQV), and 330–350 (KVIV…LLSL).

Belongs to the glycosyltransferase 4 family. MraY subfamily. Requires Mg(2+) as cofactor.

Its subcellular location is the cell inner membrane. It catalyses the reaction UDP-N-acetyl-alpha-D-muramoyl-L-alanyl-gamma-D-glutamyl-meso-2,6-diaminopimeloyl-D-alanyl-D-alanine + di-trans,octa-cis-undecaprenyl phosphate = di-trans,octa-cis-undecaprenyl diphospho-N-acetyl-alpha-D-muramoyl-L-alanyl-D-glutamyl-meso-2,6-diaminopimeloyl-D-alanyl-D-alanine + UMP. The protein operates within cell wall biogenesis; peptidoglycan biosynthesis. In terms of biological role, catalyzes the initial step of the lipid cycle reactions in the biosynthesis of the cell wall peptidoglycan: transfers peptidoglycan precursor phospho-MurNAc-pentapeptide from UDP-MurNAc-pentapeptide onto the lipid carrier undecaprenyl phosphate, yielding undecaprenyl-pyrophosphoryl-MurNAc-pentapeptide, known as lipid I. This Helicobacter pylori (strain HPAG1) protein is Phospho-N-acetylmuramoyl-pentapeptide-transferase.